The following is a 575-amino-acid chain: MKFSQLYAPTLKEAPADAEVISHALLYRAGFIRKIAAGVYSYLPLAKRTLSKIEAIVRKEMNEIGAQEVSMPVIQPAELWKTTGRWDDYGPEMMKLKDRHERDFTLGPTHEEVFTHMVKDELRSYKQLPLFLYQIGPKYRDEIRPRFGLLRAREFIMKDGYSFHDSDQSLNETYEACKNAYRKITEKIGLKYIIIEAASGAIGGNESHEFVSFAPVGETNLLKCEKCGYSSNDEQAPYRGKYHRDEEIEKPVELIHTPNVRSVEQVAEFLNVSKNKIVKSLLFIGRNGFVMALIQGDRELNIEKLKVHVNDQSLRLAEPDEVLQAFRVPIGFIGPVGIEKVHVVADCGIKYMKNVVVGGMKKDYHYINANVGRDFSPDSYTDLRVVQPNDPCPVCGEQLTGSKGIEIAQIFKLGTKYSKAMNALYMDDKGEVKPFIMGCYGWGISRTMAAIVEQLHDEDGILWPRSVAPFELIITVVSAQDQDQRIFAQKLYNSLLSSEIDVLLDDRDISPGMKFKDADLIGFPLRITVGKSLKEGMVELKSRNSSKSIKVSAELSKINSVLFKMLEEYNPHERV.

The protein belongs to the class-II aminoacyl-tRNA synthetase family. ProS type 1 subfamily. In terms of assembly, homodimer.

It is found in the cytoplasm. It catalyses the reaction tRNA(Pro) + L-proline + ATP = L-prolyl-tRNA(Pro) + AMP + diphosphate. Functionally, catalyzes the attachment of proline to tRNA(Pro) in a two-step reaction: proline is first activated by ATP to form Pro-AMP and then transferred to the acceptor end of tRNA(Pro). As ProRS can inadvertently accommodate and process non-cognate amino acids such as alanine and cysteine, to avoid such errors it has two additional distinct editing activities against alanine. One activity is designated as 'pretransfer' editing and involves the tRNA(Pro)-independent hydrolysis of activated Ala-AMP. The other activity is designated 'posttransfer' editing and involves deacylation of mischarged Ala-tRNA(Pro). The misacylated Cys-tRNA(Pro) is not edited by ProRS. The protein is Proline--tRNA ligase of Pseudothermotoga lettingae (strain ATCC BAA-301 / DSM 14385 / NBRC 107922 / TMO) (Thermotoga lettingae).